The chain runs to 659 residues: Cytochrome bo(3) ubiquinol oxidase subunit 1 (659 aa).

Over 1–14 (MFGKLSLNSIPYHD) the chain is Extracellular. A helical transmembrane segment spans residues 15 to 35 (PIIMITCCVVILVFLVISIII). Over 36-56 (TIAQKWQYLWNEWCCTVDHKK) the chain is Cytoplasmic. A helical membrane pass occupies residues 57–77 (IAKMYIFLAFIMLFRGFADAI). R71, D75, and H101 together coordinate a ubiquinone. The Extracellular portion of the chain corresponds to 78 to 109 (MMRMQQFLVSSYHGNGTGFLPPHHYDQIFTAH). H109 contributes to the heme b binding site. The chain crosses the membrane as a helical span at residues 110–130 (GVIMIFFVAMPLVIGLMNFVV). Residues 131–148 (PLQIGSRDVAFPFLNNLS) are Cytoplasmic-facing. A helical membrane pass occupies residues 149 to 169 (LWLTIFSALLMNVSLGIGEFA). At 170–192 (QTGWLAYPPLSELQYSPGVGVDY) the chain is on the extracellular side. W173 contacts heme b. Residues 193–213 (WIWSLQISGIGTTLTAINFLV) traverse the membrane as a helical segment. Residues 214 to 235 (TIIKMRSSGMNWFKIPVFTWTS) are Cytoplasmic-facing. Residues 236–256 (FCTNILIIASFPVLTVSLLLL) traverse the membrane as a helical segment. The Extracellular portion of the chain corresponds to 257-280 (TLDRYLGFHFFTNDFGGNMMMYVN). The chain crosses the membrane as a helical span at residues 281 to 301 (LIWIWGHPEVYILILPVFGIF). H287 is a binding site for Cu(2+). The 1'-histidyl-3'-tyrosine (His-Tyr) cross-link spans 287-291 (HPEVY). Residue Y291 coordinates Fe(II)-heme o. At 302–318 (SEVVATFSSKELFGYTS) the chain is on the cytoplasmic side. The helical transmembrane segment at 319-339 (LIWATIVITILSFIVWLHHFF) threads the bilayer. Residues H336 and H337 each coordinate Cu(2+). The Extracellular segment spans residues 340–350 (TMGASANVNAF). The chain crosses the membrane as a helical span at residues 351 to 371 (FGITTMIISIPTGVKIFNWLF). Topologically, residues 372 to 382 (TMYRGNVRINS) are cytoplasmic. Residues 383–403 (IMLWTIGFLITFSIGGMAGVL) form a helical membrane-spanning segment. At 404 to 416 (LSLPVIDFSLHNS) the chain is on the extracellular side. Positions 414 and 422 each coordinate Fe(II)-heme o. A helical transmembrane segment spans residues 417-437 (LFLVAHFHNVIIGGVVFGCFA). H424 is a heme b binding site. At 438–459 (GITYWFPKLFGFMLSEKWGKRA) the chain is on the cytoplasmic side. Residues 460–480 (FWCWFFGFFCAFMPLYALGLM) traverse the membrane as a helical segment. Topologically, residues 481 to 499 (GMTRRLSQNINPQFHSMLT) are extracellular. The heme b site is built by R484 and R485. The helical transmembrane segment at 500-520 (IAALGTILIFIGIVFQIIQIF) threads the bilayer. Over 521–587 (VSIRDRNLNR…KLPILYTSFH (67 aa)) the chain is Cytoplasmic. Residues 588–608 (MPKNTKFGFLIGFFAFLLGFS) form a helical membrane-spanning segment. A609 is a topological domain (extracellular). The helical transmembrane segment at 610–630 (VWYIFWLFFISFFVIIYLLVI) threads the bilayer. At 631-659 (KSLDTNCDYIISIEEIKEIEKCINIKKMD) the chain is on the cytoplasmic side.

The protein belongs to the heme-copper respiratory oxidase family. In terms of assembly, the cytochrome bo(3) ubiquinol oxidase complex is a heterooctamer of two A chains, two B chains, two C chains and two D chains. Cu(2+) is required as a cofactor. The cofactor is heme b. Requires Fe(II)-heme o as cofactor.

It localises to the cell membrane. It carries out the reaction 2 a ubiquinol + O2 + n H(+)(in) = 2 a ubiquinone + 2 H2O + n H(+)(out). Cytochrome bo(3) ubiquinol oxidase is the terminal enzyme in the aerobic respiratory chain. Catalyzes the four-electron reduction of O2 to water, using a ubiquinol as a membrane soluble electron donor for molecular oxygen reduction. Has proton pump activity across the membrane in addition to electron transfer, pumping 2 protons/electron and generating a proton motive force. All the redox centers of this enzyme complex are located within the largest subunit, subunit I. Protons are probably pumped via D- and K- channels found in this subunit. The protein is Cytochrome bo(3) ubiquinol oxidase subunit 1 (cyoB) of Buchnera aphidicola subsp. Baizongia pistaciae (strain Bp).